The primary structure comprises 109 residues: Nucleoid-associated protein CGSHiEE_00780 (109 aa).

It belongs to the YbaB/EbfC family. Homodimer.

It is found in the cytoplasm. The protein localises to the nucleoid. Its function is as follows. Binds to DNA and alters its conformation. May be involved in regulation of gene expression, nucleoid organization and DNA protection. The protein is Nucleoid-associated protein CGSHiEE_00780 of Haemophilus influenzae (strain PittEE).